A 195-amino-acid chain; its full sequence is Protein GrpE (195 aa).

Belongs to the GrpE family. Homodimer.

The protein localises to the cytoplasm. Its function is as follows. Participates actively in the response to hyperosmotic and heat shock by preventing the aggregation of stress-denatured proteins, in association with DnaK and GrpE. It is the nucleotide exchange factor for DnaK and may function as a thermosensor. Unfolded proteins bind initially to DnaJ; upon interaction with the DnaJ-bound protein, DnaK hydrolyzes its bound ATP, resulting in the formation of a stable complex. GrpE releases ADP from DnaK; ATP binding to DnaK triggers the release of the substrate protein, thus completing the reaction cycle. Several rounds of ATP-dependent interactions between DnaJ, DnaK and GrpE are required for fully efficient folding. This is Protein GrpE from Francisella tularensis subsp. tularensis (strain FSC 198).